We begin with the raw amino-acid sequence, 518 residues long: Glutamate--cysteine ligase (518 aa).

This sequence belongs to the glutamate--cysteine ligase type 1 family. Type 1 subfamily.

The catalysed reaction is L-cysteine + L-glutamate + ATP = gamma-L-glutamyl-L-cysteine + ADP + phosphate + H(+). The protein operates within sulfur metabolism; glutathione biosynthesis; glutathione from L-cysteine and L-glutamate: step 1/2. The sequence is that of Glutamate--cysteine ligase from Escherichia coli O157:H7.